We begin with the raw amino-acid sequence, 346 residues long: Uracil-DNA glycosylase (346 aa).

Residues 1 to 105 (MSGKITDFFE…KLKNEEKSEE (105 aa)) form a disordered region. Residues 20-29 (AENKDNDKEL) show a composition bias toward basic and acidic residues. Over residues 30 to 42 (TSTTTTTTTTSTT) the composition is skewed to low complexity. The segment covering 43 to 64 (SKKKVAAAPKKKAAVASKKRKH) has biased composition (basic residues). A compositionally biased stretch (acidic residues) spans 67–86 (SDEETDKEEQQNDDDDDGEE). Catalysis depends on Asp186, which acts as the Proton acceptor.

It belongs to the uracil-DNA glycosylase (UDG) superfamily. UNG family.

It is found in the mitochondrion. The protein resides in the nucleus. It carries out the reaction Hydrolyzes single-stranded DNA or mismatched double-stranded DNA and polynucleotides, releasing free uracil.. Its function is as follows. Excises uracil residues from the DNA which can arise as a result of misincorporation of dUMP residues by DNA polymerase or due to deamination of cytosine. The polypeptide is Uracil-DNA glycosylase (uglA) (Dictyostelium discoideum (Social amoeba)).